A 189-amino-acid chain; its full sequence is Chitin synthase 1 (189 aa).

It belongs to the chitin synthase family. Class I subfamily.

The protein localises to the cell membrane. It carries out the reaction [(1-&gt;4)-N-acetyl-beta-D-glucosaminyl](n) + UDP-N-acetyl-alpha-D-glucosamine = [(1-&gt;4)-N-acetyl-beta-D-glucosaminyl](n+1) + UDP + H(+). Its function is as follows. Polymerizes chitin, a structural polymer of the cell wall and septum, by transferring the sugar moiety of UDP-GlcNAc to the non-reducing end of the growing chitin polymer. The polypeptide is Chitin synthase 1 (CHS1) (Ajellomyces capsulatus (Darling's disease fungus)).